A 749-amino-acid chain; its full sequence is Protein phosphatase 1E (749 aa).

Residues 21–128 (EFRGPCGGGE…PPLPPLPRPL (108 aa)) form a disordered region. A run of 3 repeats spans residues 31-32 (PE), 33-34 (PE), and 35-36 (PE). The interval 31-44 (PEPEPESEPEPEPE) is 7 X 2 AA tandem repeats of P-E. Over residues 31-45 (PEPEPESEPEPEPEA) the composition is skewed to acidic residues. The stretch at 37–38 (SE) is one 4; approximate repeat. 3 consecutive repeat copies span residues 39–40 (PE), 41–42 (PE), and 43–44 (PE). Low complexity predominate over residues 46–55 (ELVAAEAAEA). Residues 69–102 (ATEEGEQDQDPEPEDEAVEEETATEGEEEEEEEA) are compositionally biased toward acidic residues. The span at 110–126 (VPPPPQPQLPPLPPLPR) shows a compositional bias: pro residues. One can recognise a PPM-type phosphatase domain in the interval 224 to 485 (QIYYETSIHA…DNITVIVVFL (262 aa)). 4 residues coordinate Mn(2+): D270, G271, D432, and D476. The segment at 495–537 (SEESEWTENSFQGGQEDGGDDKETHGECKRPWPQHQCSAPADL) is disordered. Residues 515–524 (DKETHGECKR) show a composition bias toward basic and acidic residues. Residues S532 and S545 each carry the phosphoserine modification. Residues 608–627 (VKSSLPERSGAGEPRVSFNL) form a disordered region.

The protein belongs to the PP2C family. Heterotrimer. Interacts with PAX1 and ARHGEF6 (or ARHGEF7). Mg(2+) serves as cofactor. It depends on Mn(2+) as a cofactor.

It is found in the nucleus. Its subcellular location is the cytoplasm. It catalyses the reaction O-phospho-L-seryl-[protein] + H2O = L-seryl-[protein] + phosphate. The catalysed reaction is O-phospho-L-threonyl-[protein] + H2O = L-threonyl-[protein] + phosphate. Functionally, protein phosphatase that inactivates multifunctional CaM kinases such as CAMK4 and CAMK2. Dephosphorylates and inactivates PAK. May play a role in the inhibition of actin fiber stress breakdown and in morphological changes driven by TNK2/CDC42. Dephosphorylates PRKAA2. The polypeptide is Protein phosphatase 1E (Ppm1e) (Mus musculus (Mouse)).